The primary structure comprises 309 residues: Elongation factor Ts (309 aa).

The segment at 82 to 85 is involved in Mg(2+) ion dislocation from EF-Tu; the sequence is TDFV.

This sequence belongs to the EF-Ts family.

The protein resides in the cytoplasm. Functionally, associates with the EF-Tu.GDP complex and induces the exchange of GDP to GTP. It remains bound to the aminoacyl-tRNA.EF-Tu.GTP complex up to the GTP hydrolysis stage on the ribosome. This is Elongation factor Ts (tsf) from Rickettsia prowazekii (strain Madrid E).